The primary structure comprises 404 residues: Cysteine desulfurase IscS (404 aa).

Residues 75-76, Asn-155, Gln-183, and 203-205 contribute to the pyridoxal 5'-phosphate site; these read AT and SGH. Lys-206 is subject to N6-(pyridoxal phosphate)lysine. Thr-243 contributes to the pyridoxal 5'-phosphate binding site. Catalysis depends on Cys-328, which acts as the Cysteine persulfide intermediate. A [2Fe-2S] cluster-binding site is contributed by Cys-328.

Belongs to the class-V pyridoxal-phosphate-dependent aminotransferase family. NifS/IscS subfamily. As to quaternary structure, homodimer. Forms a heterotetramer with IscU, interacts with other sulfur acceptors. Requires pyridoxal 5'-phosphate as cofactor.

The protein resides in the cytoplasm. It carries out the reaction (sulfur carrier)-H + L-cysteine = (sulfur carrier)-SH + L-alanine. Its pathway is cofactor biosynthesis; iron-sulfur cluster biosynthesis. Functionally, master enzyme that delivers sulfur to a number of partners involved in Fe-S cluster assembly, tRNA modification or cofactor biosynthesis. Catalyzes the removal of elemental sulfur atoms from cysteine to produce alanine. Functions as a sulfur delivery protein for Fe-S cluster synthesis onto IscU, an Fe-S scaffold assembly protein, as well as other S acceptor proteins. This Mannheimia succiniciproducens (strain KCTC 0769BP / MBEL55E) protein is Cysteine desulfurase IscS.